We begin with the raw amino-acid sequence, 115 residues long: Putative HNH nuclease YajD (115 aa).

Residues 27 to 75 (CGRCSREFVYSNLRELTVHHIDHDHTNNPEDGSNWELLCLYCHDHEHSK) enclose the HNH domain.

The protein belongs to the HNH nuclease family.

In Escherichia coli O157:H7, this protein is Putative HNH nuclease YajD (yajD).